Reading from the N-terminus, the 185-residue chain is Ribosome-recycling factor (185 aa).

Residues 163-185 (LTNEATKKIDAISKDKEKEITEG) are disordered. The segment covering 167 to 185 (ATKKIDAISKDKEKEITEG) has biased composition (basic and acidic residues).

It belongs to the RRF family.

Its subcellular location is the cytoplasm. Responsible for the release of ribosomes from messenger RNA at the termination of protein biosynthesis. May increase the efficiency of translation by recycling ribosomes from one round of translation to another. The sequence is that of Ribosome-recycling factor from Latilactobacillus sakei subsp. sakei (strain 23K) (Lactobacillus sakei subsp. sakei).